The sequence spans 340 residues: CRISPR system Cmr subunit Cmr6 (340 aa).

This sequence belongs to the CRISPR system Cmr6 family. As to quaternary structure, part of the type III-B Cmr ribonucleoprotein (RNP) complex, an elongated RNP with Cmr2 and Cmr3 as the base, with Cmr4 and Cmr5 forming a helical core along the mature crRNA (39 or 45 nt in length), while the complex is capped by Cmr6 and Cmr1. The 5' end of the crRNA is bound to Cmr2 and Cmr3, while Cmr6 and a Cmr1 subunit (Cmr1-1 or Cmr1-2) cap the 3' end of the crRNA. The target RNA lies antiparallel to the crRNA, with its 5' end near Cmr1 and Cmr6 and its 3' end near Cmr2 and Cmr3; major target cleavage occurs nears the junction of Cmr1/Cmr6 and Cmr4/Cmr, with minor cleavage occurring at 6 nt intervals which coincide with the proposed spacing of Cmr4 subunits. Interacts with Cmr4 and Cmr5.

The protein resides in the cytoplasm. CRISPR (clustered regularly interspaced short palindromic repeat), is an adaptive immune system that provides protection against mobile genetic elements (viruses, transposable elements and conjugative plasmids). CRISPR clusters contain sequences complementary to antecedent mobile elements and target invading nucleic acids. CRISPR clusters are transcribed and processed into CRISPR RNA (crRNA), formerly called psiRNA (prokaryotic silencing) in this organism. Part of the Cmr ribonucleoprotein complex which has divalent cation-dependent endoribonuclease activity specific for ssRNA complementary to the crRNA (target RNA), generating 5' hydroxy- and 3' phosphate or 2'-3' cyclic phosphate termini. Cmr4 is probably the subunit that cleaves target RNA. Cmr complex does not cleave ssDNA complementary to the crRNA. Cleavage of invading RNA is guided by the crRNA; substrate cleavage occurs a fixed distance (14 nt) from the 3' end of the crRNA. In vitro reconstitution shows Cmr1-2 and Cmr5 are not absolutely necessary for target cleavage. The sequence is that of CRISPR system Cmr subunit Cmr6 from Pyrococcus furiosus (strain ATCC 43587 / DSM 3638 / JCM 8422 / Vc1).